The sequence spans 200 residues: Imidazole glycerol phosphate synthase subunit HisH (200 aa).

One can recognise a Glutamine amidotransferase type-1 domain in the interval 3–200 (DVALIDAGGA…LRNFLEMSFP (198 aa)). Cys78 functions as the Nucleophile in the catalytic mechanism. Residues His179 and Glu181 contribute to the active site.

As to quaternary structure, heterodimer of HisH and HisF.

The protein localises to the cytoplasm. The catalysed reaction is 5-[(5-phospho-1-deoxy-D-ribulos-1-ylimino)methylamino]-1-(5-phospho-beta-D-ribosyl)imidazole-4-carboxamide + L-glutamine = D-erythro-1-(imidazol-4-yl)glycerol 3-phosphate + 5-amino-1-(5-phospho-beta-D-ribosyl)imidazole-4-carboxamide + L-glutamate + H(+). The enzyme catalyses L-glutamine + H2O = L-glutamate + NH4(+). It functions in the pathway amino-acid biosynthesis; L-histidine biosynthesis; L-histidine from 5-phospho-alpha-D-ribose 1-diphosphate: step 5/9. Its function is as follows. IGPS catalyzes the conversion of PRFAR and glutamine to IGP, AICAR and glutamate. The HisH subunit catalyzes the hydrolysis of glutamine to glutamate and ammonia as part of the synthesis of IGP and AICAR. The resulting ammonia molecule is channeled to the active site of HisF. The sequence is that of Imidazole glycerol phosphate synthase subunit HisH from Xanthomonas axonopodis pv. citri (strain 306).